A 288-amino-acid chain; its full sequence is Quinate/shikimate dehydrogenase (288 aa).

Residues Lys-71 and Asp-107 each contribute to the substrate site. Residues 132 to 135 (AGGA), 155 to 158 (NRRD), Lys-205, 232 to 235 (CVYN), and Gly-255 each bind NAD(+).

It belongs to the shikimate dehydrogenase family. In terms of assembly, homodimer.

It carries out the reaction L-quinate + NAD(+) = 3-dehydroquinate + NADH + H(+). The enzyme catalyses L-quinate + NADP(+) = 3-dehydroquinate + NADPH + H(+). The catalysed reaction is shikimate + NADP(+) = 3-dehydroshikimate + NADPH + H(+). It catalyses the reaction shikimate + NAD(+) = 3-dehydroshikimate + NADH + H(+). It participates in metabolic intermediate biosynthesis; chorismate biosynthesis; chorismate from D-erythrose 4-phosphate and phosphoenolpyruvate: step 4/7. In terms of biological role, the actual biological function of YdiB remains unclear, nor is it known whether 3-dehydroshikimate or quinate represents the natural substrate. Catalyzes the reversible NAD-dependent reduction of both 3-dehydroshikimate (DHSA) and 3-dehydroquinate to yield shikimate (SA) and quinate, respectively. It can use both NAD or NADP for catalysis, however it has higher catalytic efficiency with NAD. The polypeptide is Quinate/shikimate dehydrogenase (Escherichia coli O157:H7).